The primary structure comprises 343 residues: Multidrug resistance protein MdtN (343 aa).

Residues 1–12 (MESTPKKAPRSK) lie on the Cytoplasmic side of the membrane. Residues 13-33 (FPALLVVALALVALVFVIWRV) traverse the membrane as a helical; Signal-anchor for type II membrane protein segment. The Periplasmic portion of the chain corresponds to 34-343 (DSAPSTNDAY…ASAVANLEPQ (310 aa)).

It belongs to the membrane fusion protein (MFP) (TC 8.A.1) family. As to quaternary structure, could be part of a tripartite efflux system composed of MdtN, MdtO and MdtP.

The protein resides in the cell inner membrane. Its function is as follows. Could be involved in resistance to puromycin, acriflavine and tetraphenylarsonium chloride. In Escherichia coli O6:H1 (strain CFT073 / ATCC 700928 / UPEC), this protein is Multidrug resistance protein MdtN (mdtN).